We begin with the raw amino-acid sequence, 424 residues long: Serine--tRNA ligase (424 aa).

233-235 contributes to the L-serine binding site; the sequence is TAE. 264–266 provides a ligand contact to ATP; that stretch reads RRE. Residue Glu-287 participates in L-serine binding. 351-354 is a binding site for ATP; that stretch reads EISS. Ser-386 serves as a coordination point for L-serine.

The protein belongs to the class-II aminoacyl-tRNA synthetase family. Type-1 seryl-tRNA synthetase subfamily. As to quaternary structure, homodimer. The tRNA molecule binds across the dimer.

The protein localises to the cytoplasm. The enzyme catalyses tRNA(Ser) + L-serine + ATP = L-seryl-tRNA(Ser) + AMP + diphosphate + H(+). It catalyses the reaction tRNA(Sec) + L-serine + ATP = L-seryl-tRNA(Sec) + AMP + diphosphate + H(+). It participates in aminoacyl-tRNA biosynthesis; selenocysteinyl-tRNA(Sec) biosynthesis; L-seryl-tRNA(Sec) from L-serine and tRNA(Sec): step 1/1. In terms of biological role, catalyzes the attachment of serine to tRNA(Ser). Is also able to aminoacylate tRNA(Sec) with serine, to form the misacylated tRNA L-seryl-tRNA(Sec), which will be further converted into selenocysteinyl-tRNA(Sec). The protein is Serine--tRNA ligase of Petrotoga mobilis (strain DSM 10674 / SJ95).